The sequence spans 340 residues: L-lysine 2,3-aminomutase (340 aa).

The Radical SAM core domain maps to 106-321 (RKYNNRILLL…SMISGFLVPK (216 aa)). Positions 120, 124, and 127 each coordinate [4Fe-4S] cluster. K332 carries the post-translational modification N6-(pyridoxal phosphate)lysine.

This sequence belongs to the radical SAM superfamily. KamA family. [4Fe-4S] cluster is required as a cofactor. The cofactor is pyridoxal 5'-phosphate.

The catalysed reaction is L-lysine = D-beta-lysine. In terms of biological role, with EpmA is involved in the beta-lysylation step of the post-translational modification of translation elongation factor P (EF-P) on 'Lys-34'. EpmB appears to act before EpmA. Displays lysine 2,3-aminomutase activity, producing (R)-beta-lysine from (S)-alpha-lysine (L-lysine). This chain is L-lysine 2,3-aminomutase (epmB), found in Buchnera aphidicola subsp. Baizongia pistaciae (strain Bp).